The primary structure comprises 216 residues: Uracil phosphoribosyltransferase (216 aa).

5-phospho-alpha-D-ribose 1-diphosphate-binding positions include Arg-85, Arg-110, and 135 to 143 (DPMVATGYS). Uracil contacts are provided by residues Ile-200 and 205–207 (GDA). 5-phospho-alpha-D-ribose 1-diphosphate is bound at residue Asp-206.

The protein belongs to the UPRTase family. Mg(2+) is required as a cofactor.

It catalyses the reaction UMP + diphosphate = 5-phospho-alpha-D-ribose 1-diphosphate + uracil. The protein operates within pyrimidine metabolism; UMP biosynthesis via salvage pathway; UMP from uracil: step 1/1. Allosterically activated by GTP. Functionally, catalyzes the conversion of uracil and 5-phospho-alpha-D-ribose 1-diphosphate (PRPP) to UMP and diphosphate. This chain is Uracil phosphoribosyltransferase, found in Paraburkholderia xenovorans (strain LB400).